Here is a 356-residue protein sequence, read N- to C-terminus: Protein RecA (356 aa).

71–78 (GPESSGKT) contributes to the ATP binding site.

The protein belongs to the RecA family.

The protein resides in the cytoplasm. In terms of biological role, can catalyze the hydrolysis of ATP in the presence of single-stranded DNA, the ATP-dependent uptake of single-stranded DNA by duplex DNA, and the ATP-dependent hybridization of homologous single-stranded DNAs. It interacts with LexA causing its activation and leading to its autocatalytic cleavage. This is Protein RecA from Synechococcus elongatus (strain ATCC 33912 / PCC 7942 / FACHB-805) (Anacystis nidulans R2).